Consider the following 273-residue polypeptide: Putative pyruvate, phosphate dikinase regulatory protein (273 aa).

153 to 160 (GVSRTSKS) contacts ADP.

Belongs to the pyruvate, phosphate/water dikinase regulatory protein family. PDRP subfamily.

It carries out the reaction N(tele)-phospho-L-histidyl/L-threonyl-[pyruvate, phosphate dikinase] + ADP = N(tele)-phospho-L-histidyl/O-phospho-L-threonyl-[pyruvate, phosphate dikinase] + AMP + H(+). The catalysed reaction is N(tele)-phospho-L-histidyl/O-phospho-L-threonyl-[pyruvate, phosphate dikinase] + phosphate + H(+) = N(tele)-phospho-L-histidyl/L-threonyl-[pyruvate, phosphate dikinase] + diphosphate. Bifunctional serine/threonine kinase and phosphorylase involved in the regulation of the pyruvate, phosphate dikinase (PPDK) by catalyzing its phosphorylation/dephosphorylation. This Ehrlichia chaffeensis (strain ATCC CRL-10679 / Arkansas) protein is Putative pyruvate, phosphate dikinase regulatory protein.